The chain runs to 310 residues: Malate dehydrogenase (310 aa).

NAD(+)-binding positions include 7 to 12 (GAGNVG) and D32. R81 and R87 together coordinate substrate. NAD(+)-binding positions include N94 and 117–119 (VSN). Substrate is bound by residues N119 and R150. H174 serves as the catalytic Proton acceptor.

This sequence belongs to the LDH/MDH superfamily. MDH type 3 family. Homotetramer; arranged as a dimer of dimers.

It carries out the reaction (S)-malate + NAD(+) = oxaloacetate + NADH + H(+). Catalyzes the reversible oxidation of malate to oxaloacetate. This chain is Malate dehydrogenase, found in Prosthecochloris vibrioformis (Chlorobium vibrioforme).